Here is a 393-residue protein sequence, read N- to C-terminus: NAD(P)H-quinone oxidoreductase subunit H, chloroplastic (393 aa).

It belongs to the complex I 49 kDa subunit family. As to quaternary structure, NDH is composed of at least 16 different subunits, 5 of which are encoded in the nucleus.

It localises to the plastid. It is found in the chloroplast thylakoid membrane. The catalysed reaction is a plastoquinone + NADH + (n+1) H(+)(in) = a plastoquinol + NAD(+) + n H(+)(out). It carries out the reaction a plastoquinone + NADPH + (n+1) H(+)(in) = a plastoquinol + NADP(+) + n H(+)(out). NDH shuttles electrons from NAD(P)H:plastoquinone, via FMN and iron-sulfur (Fe-S) centers, to quinones in the photosynthetic chain and possibly in a chloroplast respiratory chain. The immediate electron acceptor for the enzyme in this species is believed to be plastoquinone. Couples the redox reaction to proton translocation, and thus conserves the redox energy in a proton gradient. This chain is NAD(P)H-quinone oxidoreductase subunit H, chloroplastic, found in Fagopyrum esculentum subsp. ancestrale (Wild buckwheat).